A 144-amino-acid chain; its full sequence is MLLPKRVKYRRQHRPKTTGRSKGGNYVTFGEFGLQATTTSWITSRQIESARIAMTRYMKRGGKVWIKIFPHTPYTKKPLEVRMGAGKGAVEGWIAVVKPGRILFEVAGVSEEVAREALRLASHKLPVKTKFVKREELGGETNES.

The segment covering 1 to 19 has biased composition (basic residues); that stretch reads MLLPKRVKYRRQHRPKTTG. The interval 1–23 is disordered; that stretch reads MLLPKRVKYRRQHRPKTTGRSKG.

It belongs to the universal ribosomal protein uL16 family. In terms of assembly, part of the 50S ribosomal subunit.

In terms of biological role, binds 23S rRNA and is also seen to make contacts with the A and possibly P site tRNAs. In Staphylococcus aureus (strain Mu50 / ATCC 700699), this protein is Large ribosomal subunit protein uL16.